We begin with the raw amino-acid sequence, 501 residues long: Glycerol kinase (501 aa).

Residue Thr-14 participates in ADP binding. ATP is bound by residues Thr-14, Thr-15, and Ser-16. Sn-glycerol 3-phosphate is bound at residue Thr-14. Arg-18 contributes to the ADP binding site. The sn-glycerol 3-phosphate site is built by Arg-84, Glu-85, and Tyr-136. The glycerol site is built by Arg-84, Glu-85, and Tyr-136. The residue at position 231 (His-231) is a Phosphohistidine; by HPr. Asp-245 is a binding site for sn-glycerol 3-phosphate. Asp-245 and Gln-246 together coordinate glycerol. Residues Thr-267 and Gly-310 each coordinate ADP. ATP is bound by residues Thr-267, Gly-310, Gln-314, and Gly-411. ADP-binding residues include Gly-411 and Asn-415.

It belongs to the FGGY kinase family. In terms of assembly, homotetramer and homodimer (in equilibrium). Post-translationally, the phosphoenolpyruvate-dependent sugar phosphotransferase system (PTS), including enzyme I, and histidine-containing protein (HPr) are required for the phosphorylation of His-231, which leads to the activation of the enzyme.

The enzyme catalyses glycerol + ATP = sn-glycerol 3-phosphate + ADP + H(+). The protein operates within polyol metabolism; glycerol degradation via glycerol kinase pathway; sn-glycerol 3-phosphate from glycerol: step 1/1. Its activity is regulated as follows. Activated by phosphorylation and inhibited by fructose 1,6-bisphosphate (FBP). In terms of biological role, key enzyme in the regulation of glycerol uptake and metabolism. Catalyzes the phosphorylation of glycerol to yield sn-glycerol 3-phosphate. The protein is Glycerol kinase of Enterococcus faecalis (strain ATCC 700802 / V583).